A 71-amino-acid chain; its full sequence is Augerpeptide-s7a (71 aa).

An N-terminal signal peptide occupies residues 1–20 (MSALKFVLICGLVLLLIETI). Residues 21-29 (PGVSLNLMR) constitute a propeptide that is removed on maturation. Intrachain disulfides connect C36/C48, C42/C65, and C47/C68.

As to expression, expressed by the venom duct.

Its subcellular location is the secreted. Its function is as follows. Elicits an uncoordinated twisting syndrome when injected into C.elegans, but has no effect on mice. This chain is Augerpeptide-s7a, found in Terebra subulata (Chocolate spotted auger).